The sequence spans 190 residues: Isopentenyl-diphosphate Delta-isomerase (190 aa).

Mn(2+)-binding residues include histidine 27 and histidine 34. Positions 32-171 constitute a Nudix hydrolase domain; it reads PLHFAFSSYI…PFVFSPWMVD (140 aa). The active site involves cysteine 69. Mg(2+) is bound at residue cysteine 69. Histidine 71 contributes to the Mn(2+) binding site. Glutamate 89 contributes to the Mg(2+) binding site. Mn(2+)-binding residues include glutamate 119 and glutamate 121. Glutamate 121 is a catalytic residue.

The protein belongs to the IPP isomerase type 1 family. Mg(2+) is required as a cofactor. It depends on Mn(2+) as a cofactor.

Its subcellular location is the cytoplasm. The enzyme catalyses isopentenyl diphosphate = dimethylallyl diphosphate. Its pathway is isoprenoid biosynthesis; dimethylallyl diphosphate biosynthesis; dimethylallyl diphosphate from isopentenyl diphosphate: step 1/1. Functionally, catalyzes the 1,3-allylic rearrangement of the homoallylic substrate isopentenyl (IPP) to its highly electrophilic allylic isomer, dimethylallyl diphosphate (DMAPP). This chain is Isopentenyl-diphosphate Delta-isomerase, found in Corynebacterium efficiens (strain DSM 44549 / YS-314 / AJ 12310 / JCM 11189 / NBRC 100395).